A 357-amino-acid chain; its full sequence is Homoserine kinase (357 aa).

A Glycyl lysine isopeptide (Lys-Gly) (interchain with G-Cter in ubiquitin) cross-link involves residue Lys-133.

Belongs to the GHMP kinase family. Homoserine kinase subfamily. As to quaternary structure, homodimer.

The catalysed reaction is L-homoserine + ATP = O-phospho-L-homoserine + ADP + H(+). It participates in amino-acid biosynthesis; L-threonine biosynthesis; L-threonine from L-aspartate: step 4/5. Its function is as follows. Commits homoserine to the threonine biosynthesis pathway by catalyzing its O-phosphorylation. The polypeptide is Homoserine kinase (THR1) (Saccharomyces cerevisiae (strain ATCC 204508 / S288c) (Baker's yeast)).